A 340-amino-acid polypeptide reads, in one-letter code: Photosystem II protein D1 (340 aa).

Transmembrane regions (helical) follow at residues 25–42 (YIGWFGLLVFPLLSLATV), 114–129 (HFFLGVCGWMGREWEF), and 138–152 (WIFVAFSAPIAAAAA). Histidine 114 provides a ligand contact to chlorophyll a. Tryptophan 122 contacts pheophytin a. [CaMn4O5] cluster contacts are provided by aspartate 166 and glutamate 185. The chain crosses the membrane as a helical span at residues 193-214 (FHILGVAGVFGGSLFSAMHGSL). Histidine 194 is a binding site for chlorophyll a. Residues histidine 211 and 260–261 (SF) each bind a quinone. Position 211 (histidine 211) interacts with Fe cation. Residue histidine 268 coordinates Fe cation. The chain crosses the membrane as a helical span at residues 270 to 284 (FLAAWPVIGIWFTSL). [CaMn4O5] cluster is bound by residues histidine 328, glutamate 329, aspartate 338, and alanine 340.

The protein belongs to the reaction center PufL/M/PsbA/D family. PSII is composed of 1 copy each of membrane proteins PsbA, PsbB, PsbC, PsbD, PsbE, PsbF, PsbH, PsbI, PsbJ, PsbK, PsbL, PsbM, PsbT, PsbX, PsbY, PsbZ, Psb30/Ycf12, at least 3 peripheral proteins of the oxygen-evolving complex and a large number of cofactors. It forms dimeric complexes. The D1/D2 heterodimer binds P680, chlorophylls that are the primary electron donor of PSII, and subsequent electron acceptors. It shares a non-heme iron and each subunit binds pheophytin, quinone, additional chlorophylls, carotenoids and lipids. D1 provides most of the ligands for the Mn4-Ca-O5 cluster of the oxygen-evolving complex (OEC). There is also a Cl(-1) ion associated with D1 and D2, which is required for oxygen evolution. The PSII complex binds additional chlorophylls, carotenoids and specific lipids. serves as cofactor. Post-translationally, tyr-157 forms a radical intermediate that is referred to as redox-active TyrZ, YZ or Y-Z.

The protein localises to the plastid. It localises to the chloroplast thylakoid membrane. The enzyme catalyses 2 a plastoquinone + 4 hnu + 2 H2O = 2 a plastoquinol + O2. In terms of biological role, photosystem II (PSII) is a light-driven water:plastoquinone oxidoreductase that uses light energy to abstract electrons from H(2)O, generating O(2) and a proton gradient subsequently used for ATP formation. It consists of a core antenna complex that captures photons, and an electron transfer chain that converts photonic excitation into a charge separation. The D1/D2 (PsbA/PsbD) reaction center heterodimer binds P680, the primary electron donor of PSII as well as several subsequent electron acceptors. This Amphidinium operculatum (Dinoflagellate) protein is Photosystem II protein D1.